The chain runs to 377 residues: Homoserine O-acetyltransferase (377 aa).

Positions 48–347 constitute an AB hydrolase-1 domain; it reads NVVLIEHALT…PVGHDAFLTE (300 aa). Residue serine 143 is the Nucleophile of the active site. Substrate is bound at residue arginine 213. Catalysis depends on residues aspartate 311 and histidine 341. Position 342 (aspartate 342) interacts with substrate.

The protein belongs to the AB hydrolase superfamily. MetX family. Homodimer.

The protein resides in the cytoplasm. The catalysed reaction is L-homoserine + acetyl-CoA = O-acetyl-L-homoserine + CoA. Its pathway is amino-acid biosynthesis; L-methionine biosynthesis via de novo pathway; O-acetyl-L-homoserine from L-homoserine: step 1/1. In terms of biological role, transfers an acetyl group from acetyl-CoA to L-homoserine, forming acetyl-L-homoserine. This is Homoserine O-acetyltransferase from Corynebacterium efficiens (strain DSM 44549 / YS-314 / AJ 12310 / JCM 11189 / NBRC 100395).